Here is a 325-residue protein sequence, read N- to C-terminus: Delta(1)-pyrroline-2-carboxylate reductase (325 aa).

Belongs to the ornithine cyclodeaminase/mu-crystallin family.

The catalysed reaction is L-proline + NAD(+) = 1-pyrroline-2-carboxylate + NADH + H(+). It carries out the reaction L-proline + NADP(+) = 1-pyrroline-2-carboxylate + NADPH + H(+). Functionally, catalyzes the reduction of Delta(1)-pyrroline-2-carboxylate (Pyr2C) to L-proline, using preferentially NADPH over NADH as the electron donor. Is likely involved in a degradation pathway that converts trans-3-hydroxy-L-proline (t3LHyp) to L-proline. This chain is Delta(1)-pyrroline-2-carboxylate reductase, found in Bacillus thuringiensis subsp. konkukian (strain 97-27).